A 78-amino-acid chain; its full sequence is Conotoxin ba1890.8 (78 aa).

A signal peptide spans 1 to 22 (MKTSGRLLFLCLAVGLLLESQA). A propeptide spanning residues 23 to 61 (HPIADAEDATRNVGSDGTSVELSEILERGQDSSAEKGQR) is cleaved from the precursor. The interval 25-78 (IADAEDATRNVGSDGTSVELSEILERGQDSSAEKGQRQNDHDVDESGHDIPFPS) is disordered. Over residues 34 to 43 (NVGSDGTSVE) the composition is skewed to polar residues. Basic and acidic residues predominate over residues 47-72 (ILERGQDSSAEKGQRQNDHDVDESGH). At Q62 the chain carries Pyrrolidone carboxylic acid.

It belongs to the conotoxin H superfamily. Expressed by the venom duct.

The protein localises to the secreted. Its function is as follows. Probable toxin. This chain is Conotoxin ba1890.8, found in Conus bayani (Bayan's cone).